A 185-amino-acid chain; its full sequence is Elongation factor P (185 aa).

Belongs to the elongation factor P family.

It is found in the cytoplasm. The protein operates within protein biosynthesis; polypeptide chain elongation. Its function is as follows. Involved in peptide bond synthesis. Stimulates efficient translation and peptide-bond synthesis on native or reconstituted 70S ribosomes in vitro. Probably functions indirectly by altering the affinity of the ribosome for aminoacyl-tRNA, thus increasing their reactivity as acceptors for peptidyl transferase. The protein is Elongation factor P of Staphylococcus aureus (strain Mu3 / ATCC 700698).